Here is a 565-residue protein sequence, read N- to C-terminus: Phosphoenolpyruvate-protein phosphotransferase (565 aa).

His-191 (tele-phosphohistidine intermediate) is an active-site residue. Arg-289 and Arg-325 together coordinate phosphoenolpyruvate. Residues Glu-427 and Asp-451 each contribute to the Mg(2+) site. Phosphoenolpyruvate contacts are provided by residues 450–451 (ND) and Arg-461. Residue Cys-498 is the Proton donor of the active site.

It belongs to the PEP-utilizing enzyme family. As to quaternary structure, homodimer. Mg(2+) is required as a cofactor.

It is found in the cytoplasm. The catalysed reaction is L-histidyl-[protein] + phosphoenolpyruvate = N(pros)-phospho-L-histidyl-[protein] + pyruvate. Its function is as follows. General (non sugar-specific) component of the phosphoenolpyruvate-dependent sugar phosphotransferase system (sugar PTS). This major carbohydrate active-transport system catalyzes the phosphorylation of incoming sugar substrates concomitantly with their translocation across the cell membrane. Enzyme I transfers the phosphoryl group from phosphoenolpyruvate (PEP) to the phosphoryl carrier protein (HPr). This chain is Phosphoenolpyruvate-protein phosphotransferase (ptsI), found in Haloferax volcanii (strain ATCC 29605 / DSM 3757 / JCM 8879 / NBRC 14742 / NCIMB 2012 / VKM B-1768 / DS2) (Halobacterium volcanii).